The primary structure comprises 192 residues: Pyridoxal 5'-phosphate synthase subunit PdxT (192 aa).

50 to 52 (GES) is an L-glutamine binding site. Residue Cys82 is the Nucleophile of the active site. L-glutamine contacts are provided by residues Arg109 and 136–137 (IR). Residues His172 and Glu174 each act as charge relay system in the active site.

The protein belongs to the glutaminase PdxT/SNO family. As to quaternary structure, in the presence of PdxS, forms a dodecamer of heterodimers. Only shows activity in the heterodimer.

The enzyme catalyses aldehydo-D-ribose 5-phosphate + D-glyceraldehyde 3-phosphate + L-glutamine = pyridoxal 5'-phosphate + L-glutamate + phosphate + 3 H2O + H(+). The catalysed reaction is L-glutamine + H2O = L-glutamate + NH4(+). The protein operates within cofactor biosynthesis; pyridoxal 5'-phosphate biosynthesis. Catalyzes the hydrolysis of glutamine to glutamate and ammonia as part of the biosynthesis of pyridoxal 5'-phosphate. The resulting ammonia molecule is channeled to the active site of PdxS. This is Pyridoxal 5'-phosphate synthase subunit PdxT from Haemophilus influenzae (strain PittEE).